Here is a 279-residue protein sequence, read N- to C-terminus: 3-methyl-2-oxobutanoate hydroxymethyltransferase (279 aa).

Mg(2+)-binding residues include D43 and D82. Residues 43-44 (DS), D82, and K112 each bind 3-methyl-2-oxobutanoate. E114 is a binding site for Mg(2+). Residue E181 is the Proton acceptor of the active site.

Belongs to the PanB family. Homodecamer; pentamer of dimers. The cofactor is Mg(2+).

The protein resides in the cytoplasm. The catalysed reaction is 3-methyl-2-oxobutanoate + (6R)-5,10-methylene-5,6,7,8-tetrahydrofolate + H2O = 2-dehydropantoate + (6S)-5,6,7,8-tetrahydrofolate. Its pathway is cofactor biosynthesis; (R)-pantothenate biosynthesis; (R)-pantoate from 3-methyl-2-oxobutanoate: step 1/2. Catalyzes the reversible reaction in which hydroxymethyl group from 5,10-methylenetetrahydrofolate is transferred onto alpha-ketoisovalerate to form ketopantoate. The sequence is that of 3-methyl-2-oxobutanoate hydroxymethyltransferase from Geobacillus sp. (strain WCH70).